The chain runs to 309 residues: tRNA pseudouridine synthase B (309 aa).

Residue Asp51 is the Nucleophile of the active site.

This sequence belongs to the pseudouridine synthase TruB family. Type 1 subfamily.

It carries out the reaction uridine(55) in tRNA = pseudouridine(55) in tRNA. In terms of biological role, responsible for synthesis of pseudouridine from uracil-55 in the psi GC loop of transfer RNAs. This chain is tRNA pseudouridine synthase B, found in Coxiella burnetii (strain RSA 331 / Henzerling II).